A 185-amino-acid polypeptide reads, in one-letter code: Ribosome-recycling factor (185 aa).

This sequence belongs to the RRF family.

Its subcellular location is the cytoplasm. Functionally, responsible for the release of ribosomes from messenger RNA at the termination of protein biosynthesis. May increase the efficiency of translation by recycling ribosomes from one round of translation to another. This Dichelobacter nodosus (strain VCS1703A) protein is Ribosome-recycling factor.